The following is a 322-amino-acid chain: uncharacterized protein (322 aa).

The stretch at 205-286 (QEIKNAHAAL…LKKAISEAVQ (82 aa)) forms a coiled coil. Basic and acidic residues-rich tracts occupy residues 254–281 (EKEE…KKAI) and 290–299 (DRIEAIEKSR). The segment at 254–322 (EKEEELNKKD…VQKSIWSGLF (69 aa)) is disordered. Over residues 310 to 322 (SEQVQKSIWSGLF) the composition is skewed to polar residues.

This sequence to B.subtilis XkdF.

This is an uncharacterized protein from Bacillus subtilis (strain 168).